The primary structure comprises 297 residues: Ketohexokinase (297 aa).

Positions 15, 41, 42, and 45 each coordinate beta-D-fructose. Residues Arg107, 225 to 228, and 254 to 257 each bind ATP; these read AEEG and GAGD. Asp257 contacts beta-D-fructose.

The protein belongs to the carbohydrate kinase PfkB family. Homodimer.

It catalyses the reaction beta-D-fructose + ATP = beta-D-fructose 1-phosphate + ADP + H(+). It participates in carbohydrate metabolism; fructose metabolism. With respect to regulation, requires potassium. Inhibition by ADP. Functionally, catalyzes the phosphorylation of the ketose sugar fructose to fructose-1-phosphate. The protein is Ketohexokinase (KHK) of Pongo abelii (Sumatran orangutan).